A 493-amino-acid chain; its full sequence is Cysteine sulfinic acid decarboxylase (493 aa).

An N6-(pyridoxal phosphate)lysine modification is found at Lys305.

The protein belongs to the group II decarboxylase family. In terms of assembly, homodimer. Pyridoxal 5'-phosphate is required as a cofactor. In terms of tissue distribution, expressed in brain, liver and kidney.

The catalysed reaction is L-aspartate + H(+) = beta-alanine + CO2. It catalyses the reaction 3-sulfino-L-alanine + H(+) = hypotaurine + CO2. The enzyme catalyses L-cysteate + H(+) = taurine + CO2. It functions in the pathway organosulfur biosynthesis; taurine biosynthesis; hypotaurine from L-cysteine: step 2/2. Functionally, catalyzes the decarboxylation of L-aspartate, 3-sulfino-L-alanine (cysteine sulfinic acid), and L-cysteate to beta-alanine, hypotaurine and taurine, respectively. The preferred substrate is 3-sulfino-L-alanine. Does not exhibit any decarboxylation activity toward glutamate. The chain is Cysteine sulfinic acid decarboxylase (Csad) from Rattus norvegicus (Rat).